Here is a 30-residue protein sequence, read N- to C-terminus: Rothein 3.1 (30 aa).

Position 30 is a leucine amide (leucine 30).

As to expression, expressed by the skin dorsal glands.

It localises to the secreted. Its function is as follows. Lacks antimicrobial activity. Does not inhibit the formation of NO by neuronal nitric oxide. The protein is Rothein 3.1 of Litoria rothii (Roth's tree frog).